The following is a 140-amino-acid chain: Phosphoribosyl-AMP cyclohydrolase (140 aa).

D85 contacts Mg(2+). C86 is a Zn(2+) binding site. D87 and D89 together coordinate Mg(2+). Zn(2+) contacts are provided by C102 and C109.

It belongs to the PRA-CH family. Homodimer. The cofactor is Mg(2+). Zn(2+) is required as a cofactor.

It is found in the cytoplasm. It carries out the reaction 1-(5-phospho-beta-D-ribosyl)-5'-AMP + H2O = 1-(5-phospho-beta-D-ribosyl)-5-[(5-phospho-beta-D-ribosylamino)methylideneamino]imidazole-4-carboxamide. Its pathway is amino-acid biosynthesis; L-histidine biosynthesis; L-histidine from 5-phospho-alpha-D-ribose 1-diphosphate: step 3/9. Its function is as follows. Catalyzes the hydrolysis of the adenine ring of phosphoribosyl-AMP. The polypeptide is Phosphoribosyl-AMP cyclohydrolase (Bradyrhizobium diazoefficiens (strain JCM 10833 / BCRC 13528 / IAM 13628 / NBRC 14792 / USDA 110)).